The chain runs to 143 residues: Large ribosomal subunit protein uL11 (143 aa).

Belongs to the universal ribosomal protein uL11 family. Part of the ribosomal stalk of the 50S ribosomal subunit. Interacts with L10 and the large rRNA to form the base of the stalk. L10 forms an elongated spine to which L12 dimers bind in a sequential fashion forming a multimeric L10(L12)X complex. Post-translationally, one or more lysine residues are methylated.

Forms part of the ribosomal stalk which helps the ribosome interact with GTP-bound translation factors. In Paraburkholderia xenovorans (strain LB400), this protein is Large ribosomal subunit protein uL11.